The primary structure comprises 391 residues: S-adenosylmethionine synthase (391 aa).

His-14 contacts ATP. Asp-16 is a binding site for Mg(2+). Glu-42 serves as a coordination point for K(+). Glu-55 and Gln-98 together coordinate L-methionine. A flexible loop region spans residues 98–108 (QSVDIAIGVDE). ATP contacts are provided by residues 172-174 (DGK), 238-239 (RF), Asp-247, 253-254 (RK), Ala-270, and Lys-274. Asp-247 lines the L-methionine pocket. Residue Lys-278 coordinates L-methionine.

This sequence belongs to the AdoMet synthase family. In terms of assembly, homotetramer; dimer of dimers. It depends on Mg(2+) as a cofactor. K(+) serves as cofactor.

Its subcellular location is the cytoplasm. The enzyme catalyses L-methionine + ATP + H2O = S-adenosyl-L-methionine + phosphate + diphosphate. It participates in amino-acid biosynthesis; S-adenosyl-L-methionine biosynthesis; S-adenosyl-L-methionine from L-methionine: step 1/1. Catalyzes the formation of S-adenosylmethionine (AdoMet) from methionine and ATP. The overall synthetic reaction is composed of two sequential steps, AdoMet formation and the subsequent tripolyphosphate hydrolysis which occurs prior to release of AdoMet from the enzyme. This is S-adenosylmethionine synthase from Clostridium botulinum (strain Okra / Type B1).